The chain runs to 64 residues: Conotoxin Tx3.5-a (64 aa).

The first 19 residues, 1–19 (MSKLGVLLTICLLLFPLTA), serve as a signal peptide directing secretion. The propeptide occupies 20–47 (LPLDGDQPADQAAERMQAEQHPLFDQKR). 3 cysteine pairs are disulfide-bonded: C49–C58, C50–C62, and C54–C63. The residue at position 63 (C63) is a Cysteine amide.

Belongs to the conotoxin M superfamily. In terms of processing, contains 3 disulfide bonds. Post-translationally, two peptides are produced from this precursor. Conotoxin Tx3.5-b is amidated at Cys-63, conotoxin Tx3.5-a has an unmodified C-terminus. Expressed by the venom duct. Is present in all duct parts with a highest content in part 2 (proximal of the venom bulb) and then decreases in concentration toward the end of the duct.

It is found in the secreted. The chain is Conotoxin Tx3.5-a from Conus textile (Cloth-of-gold cone).